The chain runs to 171 residues: Disulfide bond formation protein B (171 aa).

Residues 1 to 8 (MQWSYRFV) lie on the Cytoplasmic side of the membrane. The chain crosses the membrane as a helical span at residues 9 to 25 (SGLLVLASIVGMTFALY). Topologically, residues 26 to 43 (LEHFKGLEPCPLCIFQRV) are periplasmic. The cysteines at positions 35 and 38 are disulfide-linked. A helical transmembrane segment spans residues 44-60 (GLMAMGIVALIAFLHNP). The Cytoplasmic segment spans residues 61 to 67 (VSNAFKR). The chain crosses the membrane as a helical span at residues 68–85 (VYAFLATLGILWSVGVAI). Over 86–142 (RHVWLQTLPPDQVPSCGPGLNYLLDALPLKTVLQQVLQGSGECAAIHWTFLGQSLPV) the chain is Periplasmic. C101 and C128 are oxidised to a cystine. The chain crosses the membrane as a helical span at residues 143-161 (WSLAYFSLILLVCVWQLLR). The Cytoplasmic segment spans residues 162–171 (RYPVIVTKKK).

This sequence belongs to the DsbB family.

The protein resides in the cell inner membrane. Required for disulfide bond formation in some periplasmic proteins. Acts by oxidizing the DsbA protein. In Acinetobacter baylyi (strain ATCC 33305 / BD413 / ADP1), this protein is Disulfide bond formation protein B.